The primary structure comprises 481 residues: Glutamate--tRNA ligase 2 (481 aa).

Positions 17–27 (PSPTGFLHIGG) match the 'HIGH' region motif. Residues 118–139 (AEQRAKKQPQRYDGRWRDRDPS) are compositionally biased toward basic and acidic residues. The segment at 118–143 (AEQRAKKQPQRYDGRWRDRDPSEAPA) is disordered. The short motif at 246-250 (KLSKR) is the 'KMSKS' region element. Lys249 serves as a coordination point for ATP.

It belongs to the class-I aminoacyl-tRNA synthetase family. Glutamate--tRNA ligase type 1 subfamily. As to quaternary structure, monomer.

It localises to the cytoplasm. The catalysed reaction is tRNA(Glu) + L-glutamate + ATP = L-glutamyl-tRNA(Glu) + AMP + diphosphate. Catalyzes the attachment of glutamate to tRNA(Glu) in a two-step reaction: glutamate is first activated by ATP to form Glu-AMP and then transferred to the acceptor end of tRNA(Glu). This chain is Glutamate--tRNA ligase 2, found in Zymomonas mobilis subsp. mobilis (strain ATCC 31821 / ZM4 / CP4).